A 259-amino-acid chain; its full sequence is 3-deoxy-manno-octulosonate cytidylyltransferase (259 aa).

The protein belongs to the KdsB family.

The protein resides in the cytoplasm. It catalyses the reaction 3-deoxy-alpha-D-manno-oct-2-ulosonate + CTP = CMP-3-deoxy-beta-D-manno-octulosonate + diphosphate. It functions in the pathway nucleotide-sugar biosynthesis; CMP-3-deoxy-D-manno-octulosonate biosynthesis; CMP-3-deoxy-D-manno-octulosonate from 3-deoxy-D-manno-octulosonate and CTP: step 1/1. It participates in bacterial outer membrane biogenesis; lipopolysaccharide biosynthesis. Its function is as follows. Activates KDO (a required 8-carbon sugar) for incorporation into bacterial lipopolysaccharide in Gram-negative bacteria. In Maricaulis maris (strain MCS10) (Caulobacter maris), this protein is 3-deoxy-manno-octulosonate cytidylyltransferase.